A 436-amino-acid chain; its full sequence is Histidinol dehydrogenase (436 aa).

Substrate contacts are provided by serine 242, glutamine 264, and histidine 267. Residues glutamine 264 and histidine 267 each coordinate Zn(2+). Catalysis depends on proton acceptor residues glutamate 332 and histidine 333. Substrate is bound by residues histidine 333, aspartate 366, glutamate 420, and histidine 425. Aspartate 366 serves as a coordination point for Zn(2+). A Zn(2+)-binding site is contributed by histidine 425.

Belongs to the histidinol dehydrogenase family. The cofactor is Zn(2+).

The catalysed reaction is L-histidinol + 2 NAD(+) + H2O = L-histidine + 2 NADH + 3 H(+). Its pathway is amino-acid biosynthesis; L-histidine biosynthesis; L-histidine from 5-phospho-alpha-D-ribose 1-diphosphate: step 9/9. In terms of biological role, catalyzes the sequential NAD-dependent oxidations of L-histidinol to L-histidinaldehyde and then to L-histidine. This chain is Histidinol dehydrogenase, found in Nitratidesulfovibrio vulgaris (strain ATCC 29579 / DSM 644 / CCUG 34227 / NCIMB 8303 / VKM B-1760 / Hildenborough) (Desulfovibrio vulgaris).